The chain runs to 490 residues: Serine/threonine-protein kinase PBL35 (490 aa).

Disordered regions lie at residues 1-39 and 80-103; these read MGFD…RNSE and SAIV…SNAE. Residues 14 to 39 adopt a coiled-coil conformation; the sequence is SKTSNENEKKKKKRRRKKNNNVRNSE. The segment covering 23–33 has biased composition (basic residues); the sequence is KKKKRRRKKNN. Residues 94–103 are compositionally biased toward low complexity; sequence SSTTTTSNAE. One can recognise a Protein kinase domain in the interval 136–422; sequence FRPESLLGEG…VEVLKPLPHL (287 aa). ATP is bound by residues 142–150 and K174; that span reads LGEGGFGCV. Y219 carries the phosphotyrosine modification. D269 functions as the Proton acceptor in the catalytic mechanism. Residues S273 and S303 each carry the phosphoserine modification. 2 positions are modified to phosphothreonine: T304 and T309. Y317 carries the phosphotyrosine modification. A disordered region spans residues 442 to 490; sequence AGSGSGSGRGFGSRNGQPVFRTLSSPHGQAGSSPYRHQIPSPKPKGATT. Over residues 444-454 the composition is skewed to gly residues; it reads SGSGSGRGFGS. The segment covering 463–473 has biased composition (polar residues); that stretch reads TLSSPHGQAGS.

This sequence belongs to the protein kinase superfamily. Ser/Thr protein kinase family. Interacts with SD129. Phosphorylated by SD129 in response to the pathogen-associated molecular pattern (PAMP) 3-OH-C10:0, a medium-chain 3-hydroxy fatty acid.

The protein resides in the cell membrane. The enzyme catalyses L-seryl-[protein] + ATP = O-phospho-L-seryl-[protein] + ADP + H(+). The catalysed reaction is L-threonyl-[protein] + ATP = O-phospho-L-threonyl-[protein] + ADP + H(+). Functionally, involved in chitin-triggered immune signaling and is required for reactive oxygen species (ROS) production. Acts downstream of SD129 in defense signaling triggered by the pathogen-associated molecular pattern (PAMP) 3-OH-C10:0, a medium-chain 3-hydroxy fatty acid. The chain is Serine/threonine-protein kinase PBL35 from Arabidopsis thaliana (Mouse-ear cress).